A 727-amino-acid polypeptide reads, in one-letter code: 1,4-alpha-glucan branching enzyme GlgB (727 aa).

D405 serves as the catalytic Nucleophile. The Proton donor role is filled by E458.

This sequence belongs to the glycosyl hydrolase 13 family. GlgB subfamily. Monomer.

The catalysed reaction is Transfers a segment of a (1-&gt;4)-alpha-D-glucan chain to a primary hydroxy group in a similar glucan chain.. Its pathway is glycan biosynthesis; glycogen biosynthesis. Catalyzes the formation of the alpha-1,6-glucosidic linkages in glycogen by scission of a 1,4-alpha-linked oligosaccharide from growing alpha-1,4-glucan chains and the subsequent attachment of the oligosaccharide to the alpha-1,6 position. The protein is 1,4-alpha-glucan branching enzyme GlgB of Yersinia pseudotuberculosis serotype O:1b (strain IP 31758).